Consider the following 208-residue polypeptide: FMN-dependent NADH:quinone oxidoreductase 2 (208 aa).

The protein belongs to the azoreductase type 1 family. In terms of assembly, homodimer. FMN is required as a cofactor.

It catalyses the reaction 2 a quinone + NADH + H(+) = 2 a 1,4-benzosemiquinone + NAD(+). The enzyme catalyses N,N-dimethyl-1,4-phenylenediamine + anthranilate + 2 NAD(+) = 2-(4-dimethylaminophenyl)diazenylbenzoate + 2 NADH + 2 H(+). Quinone reductase that provides resistance to thiol-specific stress caused by electrophilic quinones. Functionally, also exhibits azoreductase activity. Catalyzes the reductive cleavage of the azo bond in aromatic azo compounds to the corresponding amines. The protein is FMN-dependent NADH:quinone oxidoreductase 2 of Bacillus cereus (strain ATCC 10987 / NRS 248).